Reading from the N-terminus, the 83-residue chain is NAD(P)H-quinone oxidoreductase subunit L (83 aa).

2 helical membrane-spanning segments follow: residues 15-35 (LLVL…VPLA) and 53-73 (LGIY…APFL).

The protein belongs to the complex I NdhL subunit family. NDH-1 can be composed of about 15 different subunits; different subcomplexes with different compositions have been identified which probably have different functions.

It localises to the cellular thylakoid membrane. It carries out the reaction a plastoquinone + NADH + (n+1) H(+)(in) = a plastoquinol + NAD(+) + n H(+)(out). It catalyses the reaction a plastoquinone + NADPH + (n+1) H(+)(in) = a plastoquinol + NADP(+) + n H(+)(out). NDH-1 shuttles electrons from an unknown electron donor, via FMN and iron-sulfur (Fe-S) centers, to quinones in the respiratory and/or the photosynthetic chain. The immediate electron acceptor for the enzyme in this species is believed to be plastoquinone. Couples the redox reaction to proton translocation, and thus conserves the redox energy in a proton gradient. Cyanobacterial NDH-1 also plays a role in inorganic carbon-concentration. This is NAD(P)H-quinone oxidoreductase subunit L from Synechococcus sp. (strain CC9605).